The primary structure comprises 294 residues: Tyrosine-protein phosphatase (294 aa).

An N-terminal signal peptide occupies residues 1–24; that stretch reads MKTHHANLALALMLGLSSSATAVA. Cys182 functions as the Phosphocysteine intermediate in the catalytic mechanism. 2 stretches are compositionally biased toward basic and acidic residues: residues 221-231 and 238-247; these read QPKDSDERADH and PGDRPQDGGH. The interval 221 to 252 is disordered; sequence QPKDSDERADHGAGQAEPGDRPQDGGHGRYRA.

It belongs to the protein-tyrosine phosphatase family. Monomer.

It catalyses the reaction O-phospho-L-tyrosyl-[protein] + H2O = L-tyrosyl-[protein] + phosphate. The chain is Tyrosine-protein phosphatase (iphP) from Nostoc commune.